Consider the following 27-residue polypeptide: U18-ctenitoxin-Co1a (27 aa).

Belongs to the u18-CNTX family. In terms of tissue distribution, expressed by the venom gland.

The protein localises to the secreted. Functionally, not toxic to mice by intracerebroventricular injection. In Ctenus ornatus (Brazilian spider), this protein is U18-ctenitoxin-Co1a.